The primary structure comprises 440 residues: Exodeoxyribonuclease 7 large subunit (440 aa).

The protein belongs to the XseA family. Heterooligomer composed of large and small subunits.

Its subcellular location is the cytoplasm. It carries out the reaction Exonucleolytic cleavage in either 5'- to 3'- or 3'- to 5'-direction to yield nucleoside 5'-phosphates.. In terms of biological role, bidirectionally degrades single-stranded DNA into large acid-insoluble oligonucleotides, which are then degraded further into small acid-soluble oligonucleotides. This chain is Exodeoxyribonuclease 7 large subunit, found in Ralstonia nicotianae (strain ATCC BAA-1114 / GMI1000) (Ralstonia solanacearum).